Here is a 224-residue protein sequence, read N- to C-terminus: Uracil-DNA glycosylase (224 aa).

Asp-65 serves as the catalytic Proton acceptor.

The protein belongs to the uracil-DNA glycosylase (UDG) superfamily. UNG family.

The protein resides in the cytoplasm. It carries out the reaction Hydrolyzes single-stranded DNA or mismatched double-stranded DNA and polynucleotides, releasing free uracil.. Its function is as follows. Excises uracil residues from the DNA which can arise as a result of misincorporation of dUMP residues by DNA polymerase or due to deamination of cytosine. This chain is Uracil-DNA glycosylase, found in Buchnera aphidicola subsp. Baizongia pistaciae (strain Bp).